We begin with the raw amino-acid sequence, 529 residues long: uncharacterized protein (529 aa).

The protein to M.jannaschii MJ1451.

This is an uncharacterized protein from Methanothermobacter thermautotrophicus (strain ATCC 29096 / DSM 1053 / JCM 10044 / NBRC 100330 / Delta H) (Methanobacterium thermoautotrophicum).